The following is a 557-amino-acid chain: Carbamoyl phosphate synthase large chain, N-terminal section (557 aa).

The tract at residues 1–402 is carboxyphosphate synthetic domain; that stretch reads MPKRTDIKKI…ALLKAVRSLE (402 aa). Positions 129, 169, 175, 176, 208, 210, 215, 241, 242, 243, 285, and 299 each coordinate ATP. An ATP-grasp domain is found at 133 to 328; that stretch reads KETMESIGLK…IAKVAAKLAV (196 aa). 3 residues coordinate Mg(2+): Gln285, Glu299, and Asn301. Gln285, Glu299, and Asn301 together coordinate Mn(2+). The oligomerization domain stretch occupies residues 403-553; sequence LDRYGLAFPK…PYYTVDGQEI (151 aa).

The protein belongs to the CarB family. Composed of two chains; the small (or glutamine) chain promotes the hydrolysis of glutamine to ammonia, which is used by the large (or ammonia) chain to synthesize carbamoyl phosphate. Tetramer of heterodimers (alpha,beta)4. It depends on Mg(2+) as a cofactor. Mn(2+) serves as cofactor.

The catalysed reaction is hydrogencarbonate + L-glutamine + 2 ATP + H2O = carbamoyl phosphate + L-glutamate + 2 ADP + phosphate + 2 H(+). It carries out the reaction hydrogencarbonate + NH4(+) + 2 ATP = carbamoyl phosphate + 2 ADP + phosphate + 2 H(+). The protein operates within amino-acid biosynthesis; L-arginine biosynthesis; carbamoyl phosphate from bicarbonate: step 1/1. It participates in pyrimidine metabolism; UMP biosynthesis via de novo pathway; (S)-dihydroorotate from bicarbonate: step 1/3. In terms of biological role, large subunit of the glutamine-dependent carbamoyl phosphate synthetase (CPSase). CPSase catalyzes the formation of carbamoyl phosphate from the ammonia moiety of glutamine, carbonate, and phosphate donated by ATP, constituting the first step of 2 biosynthetic pathways, one leading to arginine and/or urea and the other to pyrimidine nucleotides. The large subunit (synthetase) binds the substrates ammonia (free or transferred from glutamine from the small subunit), hydrogencarbonate and ATP and carries out an ATP-coupled ligase reaction, activating hydrogencarbonate by forming carboxy phosphate which reacts with ammonia to form carbamoyl phosphate. This chain is Carbamoyl phosphate synthase large chain, N-terminal section (carB1), found in Aquifex aeolicus (strain VF5).